A 132-amino-acid polypeptide reads, in one-letter code: Phosphoribosyl-ATP pyrophosphatase (132 aa).

It belongs to the PRA-PH family.

Its subcellular location is the cytoplasm. It carries out the reaction 1-(5-phospho-beta-D-ribosyl)-ATP + H2O = 1-(5-phospho-beta-D-ribosyl)-5'-AMP + diphosphate + H(+). The protein operates within amino-acid biosynthesis; L-histidine biosynthesis; L-histidine from 5-phospho-alpha-D-ribose 1-diphosphate: step 2/9. This is Phosphoribosyl-ATP pyrophosphatase from Acidovorax sp. (strain JS42).